The following is a 227-amino-acid chain: MENLKKMAGIKAAEFVSDGMVVGLGTGSTAYYFVEEIGRRIKEEGLQITAVTTSSVTSKQAEGLNIPLKSIDQVDFVDVTVDGADEVDSQFNGIKGGGGALLMEKIVATPSKEYIWVVDESKLVDKLGAFKLPVEVVQYGAEQIFRRFERAGYKPSFREKDGQRFVTDMQNFIIDLALDVIEDPIVFGQELDHVVGVVEHGLFNQMVDKVIVAGRDGVQILTSRKEK.

Residues 26 to 29 (TGST), 82 to 85 (DGAD), and 95 to 98 (KGGG) each bind substrate. Glutamate 104 functions as the Proton acceptor in the catalytic mechanism. Lysine 122 contributes to the substrate binding site.

It belongs to the ribose 5-phosphate isomerase family. In terms of assembly, homodimer.

The enzyme catalyses aldehydo-D-ribose 5-phosphate = D-ribulose 5-phosphate. Its pathway is carbohydrate degradation; pentose phosphate pathway; D-ribose 5-phosphate from D-ribulose 5-phosphate (non-oxidative stage): step 1/1. Functionally, catalyzes the reversible conversion of ribose-5-phosphate to ribulose 5-phosphate. The protein is Ribose-5-phosphate isomerase A of Streptococcus pneumoniae (strain Hungary19A-6).